The sequence spans 1527 residues: uncharacterized protein (1527 aa).

Coiled coils occupy residues 262–293 (NVEISRDKIKKLKDKNEIFNQLINEFGENINE), 699–751 (QQQQ…SEKL), 905–932 (NNLNIINNNQENNNNNNNDLKETIENQI), and 1217–1255 (KIISSELELEQQQQQQQQQQQQQQQQQQQQQQQQQQKSS). Positions 683 to 734 (TNQEQEQDQQDQPPPPQQQQEQQQEQQQQQEQQQQQDQQQQDQQQDQQEKQQ) are disordered. Residues 700-728 (QQQEQQQEQQQQQEQQQQQDQQQQDQQQD) are compositionally biased toward low complexity.

This is an uncharacterized protein from Dictyostelium discoideum (Social amoeba).